The primary structure comprises 199 residues: Recombination protein RecR (199 aa).

The segment at 58-73 (CRTCFSLSDQPECRIC) adopts a C4-type zinc-finger fold. In terms of domain architecture, Toprim spans 81–176 (SIICVVEKPT…NVTRIASGVP (96 aa)).

It belongs to the RecR family.

May play a role in DNA repair. It seems to be involved in an RecBC-independent recombinational process of DNA repair. It may act with RecF and RecO. The sequence is that of Recombination protein RecR from Desulforapulum autotrophicum (strain ATCC 43914 / DSM 3382 / VKM B-1955 / HRM2) (Desulfobacterium autotrophicum).